The chain runs to 424 residues: Serine--tRNA ligase (424 aa).

Position 233–235 (233–235) interacts with L-serine; the sequence is TAE. 264 to 266 contributes to the ATP binding site; it reads RRE. Position 287 (E287) interacts with L-serine. Residue 351–354 participates in ATP binding; it reads EISS. An L-serine-binding site is contributed by S386.

Belongs to the class-II aminoacyl-tRNA synthetase family. Type-1 seryl-tRNA synthetase subfamily. Homodimer. The tRNA molecule binds across the dimer.

The protein resides in the cytoplasm. The catalysed reaction is tRNA(Ser) + L-serine + ATP = L-seryl-tRNA(Ser) + AMP + diphosphate + H(+). The enzyme catalyses tRNA(Sec) + L-serine + ATP = L-seryl-tRNA(Sec) + AMP + diphosphate + H(+). It participates in aminoacyl-tRNA biosynthesis; selenocysteinyl-tRNA(Sec) biosynthesis; L-seryl-tRNA(Sec) from L-serine and tRNA(Sec): step 1/1. Catalyzes the attachment of serine to tRNA(Ser). Is also able to aminoacylate tRNA(Sec) with serine, to form the misacylated tRNA L-seryl-tRNA(Sec), which will be further converted into selenocysteinyl-tRNA(Sec). This Petrotoga mobilis (strain DSM 10674 / SJ95) protein is Serine--tRNA ligase.